The sequence spans 935 residues: 2-oxoglutarate dehydrogenase E1 component (935 aa).

Belongs to the alpha-ketoglutarate dehydrogenase family. As to quaternary structure, homodimer. Part of the 2-oxoglutarate dehydrogenase (OGDH) complex composed of E1 (2-oxoglutarate dehydrogenase), E2 (dihydrolipoamide succinyltransferase) and E3 (dihydrolipoamide dehydrogenase); the complex contains multiple copies of the three enzymatic components (E1, E2 and E3). The cofactor is thiamine diphosphate.

It carries out the reaction N(6)-[(R)-lipoyl]-L-lysyl-[protein] + 2-oxoglutarate + H(+) = N(6)-[(R)-S(8)-succinyldihydrolipoyl]-L-lysyl-[protein] + CO2. Functionally, E1 component of the 2-oxoglutarate dehydrogenase (OGDH) complex which catalyzes the decarboxylation of 2-oxoglutarate, the first step in the conversion of 2-oxoglutarate to succinyl-CoA and CO(2). The polypeptide is 2-oxoglutarate dehydrogenase E1 component (sucA) (Haemophilus influenzae (strain ATCC 51907 / DSM 11121 / KW20 / Rd)).